Consider the following 373-residue polypeptide: Glutamate 5-kinase (373 aa).

Lysine 15 is an ATP binding site. Serine 55, aspartate 142, and asparagine 154 together coordinate substrate. Residues 174–175 (TD) and 216–222 (TGGMATK) each bind ATP. One can recognise a PUA domain in the interval 281 to 359 (AGRIIVDDGA…SRIEAILGYR (79 aa)).

This sequence belongs to the glutamate 5-kinase family.

Its subcellular location is the cytoplasm. The catalysed reaction is L-glutamate + ATP = L-glutamyl 5-phosphate + ADP. The protein operates within amino-acid biosynthesis; L-proline biosynthesis; L-glutamate 5-semialdehyde from L-glutamate: step 1/2. Catalyzes the transfer of a phosphate group to glutamate to form L-glutamate 5-phosphate. The protein is Glutamate 5-kinase of Pelobacter propionicus (strain DSM 2379 / NBRC 103807 / OttBd1).